A 264-amino-acid polypeptide reads, in one-letter code: 3-methyl-2-oxobutanoate hydroxymethyltransferase (264 aa).

Mg(2+) is bound by residues Asp45 and Asp84. Residues 45–46, Asp84, and Lys112 contribute to the 3-methyl-2-oxobutanoate site; that span reads DS. Position 114 (Glu114) interacts with Mg(2+). Catalysis depends on Glu181, which acts as the Proton acceptor.

It belongs to the PanB family. In terms of assembly, homodecamer; pentamer of dimers. The cofactor is Mg(2+).

The protein resides in the cytoplasm. It carries out the reaction 3-methyl-2-oxobutanoate + (6R)-5,10-methylene-5,6,7,8-tetrahydrofolate + H2O = 2-dehydropantoate + (6S)-5,6,7,8-tetrahydrofolate. Its pathway is cofactor biosynthesis; (R)-pantothenate biosynthesis; (R)-pantoate from 3-methyl-2-oxobutanoate: step 1/2. Its function is as follows. Catalyzes the reversible reaction in which hydroxymethyl group from 5,10-methylenetetrahydrofolate is transferred onto alpha-ketoisovalerate to form ketopantoate. This chain is 3-methyl-2-oxobutanoate hydroxymethyltransferase, found in Shigella flexneri serotype 5b (strain 8401).